Reading from the N-terminus, the 340-residue chain is Protein RecA (340 aa).

65-72 (GPESGGKT) is an ATP binding site.

It belongs to the RecA family.

It localises to the cytoplasm. Its function is as follows. Can catalyze the hydrolysis of ATP in the presence of single-stranded DNA, the ATP-dependent uptake of single-stranded DNA by duplex DNA, and the ATP-dependent hybridization of homologous single-stranded DNAs. It interacts with LexA causing its activation and leading to its autocatalytic cleavage. This Thermus thermophilus protein is Protein RecA.